A 441-amino-acid chain; its full sequence is MAHFLETQEPLVFSGKKRNDRDDEDGDALVAKKSALAVCDADPAAAIANIRHEFGEHGGVNMSIEASATFTVMEPDTMRRMFTGELGPDNDFYVYSRHFNPTVLNLSRQMAALEGTQAAYCTSSGMSAISSVMLQLCSSGGHVVAASTLYGGTHALLSHFLPRTCNITTSFVDITDHGAVANAIVEGRTQVLYFESVANPTLTVADIPELSRMAHEKGVTVVVDNTFAPMVLSPAKLGADVVVHSISKFISGGADIIAGAVCGSENLVKEMMDLRGGSLMLLGPTMNAKVAFELSERIPHLGLRMREHSHRAQVYAERMRDLGMKVIYPGLETHPQHKLFKGMVNRDYGYGGLLSIDMETEEKANKLMAYLQNATQFGFMAVSLGYYETLMSCSGSSTSSELDPSQKEAAGISPGLVRMSVGYVGTLEQKWTQFEKAFLRM.

The segment at 1-25 (MAHFLETQEPLVFSGKKRNDRDDED) is disordered. K248 carries the post-translational modification N6-(pyridoxal phosphate)lysine.

Belongs to the trans-sulfuration enzymes family. Homotetramer. Pyridoxal 5'-phosphate is required as a cofactor. As to expression, expressed in roots, stems, siliques, leaves, flowers and seeds after imbibition (at protein level). Transcripts accumulate in dry mature seeds, but at protein level, only present upon imbibition.

It is found in the cytoplasm. It carries out the reaction L-methionine + H2O = methanethiol + 2-oxobutanoate + NH4(+). Functionally, catalyzes the degradation of L-methionine to alpha-ketobutyrate, methanethiol and ammonia. Exhibits a high activity toward L-methionine, L-ethionine, L-homocysteine and seleno-L-methionine, but not L-cysteine. Involved in an alternative cysteine biosynthesis pathway to the reverse trans-sulfuration pathway (methionine-&gt;homocysteine-&gt;cystathionine-&gt;cysteine) in which methanethiol is an intermediate. Also mediates an alternative isoleucine biosynthesis pathway in which 2-ketobutyrate is an intermediate. This Arabidopsis thaliana (Mouse-ear cress) protein is Methionine gamma-lyase (MGL).